The following is a 135-amino-acid chain: Transcriptional activator protein (135 aa).

The short motif at 17–32 is the Nuclear localization signal element; it reads KVQHKIAKKKPIRRKR. A zinc finger lies at 37 to 54; the sequence is CGCSYYLHLNCNNHGFTH. Polar residues-rich tracts occupy residues 77–87 and 101–115; these read LFQDNRTQPEA and IQPQ…SQMF. Residues 77–117 are disordered; sequence LFQDNRTQPEAISNEPRHHFHSDKIQPQHQEGNGDSQMFSR. Residues 120 to 135 are transactivation; sequence NLDDITASDWSFLKSI.

Belongs to the geminiviridae transcriptional activator protein family. In terms of assembly, monomer. Homodimer. Homooligomer. Self-interaction correlates with nuclear localization and efficient activation of transcription. Monomers suppress local silencing by interacting with and inactivating host adenosine kinase 2 (ADK2) in the cytoplasm. Interacts with and inhibits host SNF1 kinase. Binds to ssDNA. May interact with host RPS27A. Post-translationally, phosphorylated.

Its subcellular location is the host nucleus. It localises to the host cytoplasm. Multifunctional protein that modulates host antiviral defenses and promotes host attractiveness to insect vectors. Acts as a suppressor of RNA-mediated gene silencing, also known as post-transcriptional gene silencing (PTGS), a mechanism of plant viral defense that limits the accumulation of viral RNAs. TrAP suppresses the host RNA silencing by inhibiting adenosine kinase 2 (ADK2), a kinase involved in a general methylation pathway. Also suppresses the host basal defense by interacting with and inhibiting SNF1 kinase, a key regulator of cell metabolism implicated in innate antiviral defense. In terms of biological role, inhibits signal transduction by the phytohormone jasmonate, making the infected plant more attractive to aphids, which are the second host to play a role as a dissemination vector. Acts by binding to ubiquitin precursor RPS27A, thereby preventing ubiquitin degradation of JAZ. This Tomato yellow leaf curl virus (strain Israel) (TYLCV) protein is Transcriptional activator protein.